The chain runs to 317 residues: Uridine phosphorylase 2 (317 aa).

Phosphate-binding positions include Gly-66, Arg-100, and 144–147 (RIGT). Cys-95 and Cys-102 are disulfide-bonded. Uridine is bound by residues 148–149 (SG) and 223–225 (QGR).

Belongs to the PNP/UDP phosphorylase family. Homodimer. Predominantly expressed in kidney.

The enzyme catalyses uridine + phosphate = alpha-D-ribose 1-phosphate + uracil. The catalysed reaction is 2'-deoxyuridine + phosphate = 2-deoxy-alpha-D-ribose 1-phosphate + uracil. The protein operates within pyrimidine metabolism; UMP biosynthesis via salvage pathway; uracil from uridine (phosphorylase route): step 1/1. With respect to regulation, a conditional disulfide bridge can form within the protein that dislocates a critical phosphate-coordinating arginine Arg-100 away from the active site, disabling the enzyme. In terms of biological role, catalyzes the reversible phosphorylytic cleavage of uridine to uracil and ribose-1-phosphate which can then be utilized as carbon and energy sources or in the rescue of pyrimidine bases for nucleotide synthesis. Shows broad substrate specificity and can also accept deoxyuridine and other analogous compounds. The sequence is that of Uridine phosphorylase 2 from Homo sapiens (Human).